The sequence spans 560 residues: Nibrin homolog (560 aa).

One can recognise an FHA domain in the interval 25 to 87; the sequence is YKVGRKDCDV…YGTFFNKVQG (63 aa). The region spanning 115-190 is the BRCT domain; sequence TFRLSFVPIV…KQIVLGDWFK (76 aa). The Nuclear localization signal motif lies at 511–518; the sequence is YKRGTVID.

Belongs to the Nibrin family. As to quaternary structure, component of the MRN complex composed of two heterodimers RAD50 and MRE11 associated with a single NBS1.

It is found in the nucleus. Its subcellular location is the chromosome. Functionally, component of the MRN complex, which plays a central role in double-strand break (DSB) repair, DNA recombination, maintenance of telomere integrity and meiosis. The MRN complex is involved in the repair of DNA double-strand breaks (DSBs) via homologous recombination (HR), an error-free mechanism which primarily occurs during S and G2 phases. The complex (1) mediates the end resection of damaged DNA, which generates proper single-stranded DNA, a key initial steps in HR, and is (2) required for the recruitment of other repair factors and efficient activation of ATM and ATR upon DNA damage. The MRN complex possesses single-strand endonuclease activity and double-strand-specific 3'-5' exonuclease activity, which are provided by MRE11, to initiate end resection, which is required for single-strand invasion and recombination. Within the MRN complex, NBS1 acts as a protein-protein adapter, which specifically recognizes and binds phosphorylated proteins, promoting their recruitment to DNA damage sites. Recruits MRE11 and RAD50 components of the MRN complex to DSBs in response to DNA damage. This chain is Nibrin homolog, found in Oryza sativa subsp. indica (Rice).